The sequence spans 436 residues: Serine protease hepsin (436 aa).

Positions 1–29 (MAKEDEEPGAHRGGSTCSRPQPGKGGRTA) are disordered. Topologically, residues 1 to 38 (MAKEDEEPGAHRGGSTCSRPQPGKGGRTAACCSRPKVA) are cytoplasmic. Residues 39-59 (ALIVGTLLFLTGIGAASWAIV) form a helical; Signal-anchor for type II membrane protein membrane-spanning segment. The Extracellular segment spans residues 60–436 (TILLQSDQEP…SEASGMVTQP (377 aa)). Positions 73-170 (VQLSPGDSRL…RGRFLTATCQ (98 aa)) constitute an SRCR domain. Disulfide bonds link Cys96–Cys159, Cys109–Cys169, Cys138–Cys157, Cys172–Cys296, Cys207–Cys223, Cys310–Cys378, Cys341–Cys357, and Cys368–Cys400. N-linked (GlcNAc...) asparagine glycosylation occurs at Asn131. One can recognise a Peptidase S1 domain in the interval 182 to 424 (IVGGQDSSLG…FREWIFKAIK (243 aa)). Active-site charge relay system residues include His222 and Asp276. The active-site Charge relay system is the Ser372.

The protein belongs to the peptidase S1 family. Detected in kidney, in thick ascending tubule epithelial cells (at protein level). Detected in kidney and liver.

The protein resides in the apical cell membrane. Its subcellular location is the cell membrane. It is found in the secreted. The enzyme catalyses Cleavage after basic amino-acid residues, with Arg strongly preferred to Lys.. In terms of biological role, serine protease that cleaves extracellular substrates, and contributes to the proteolytic processing of growth factors, such as HGF and MST1/HGFL. Plays a role in cell growth and maintenance of cell morphology. Plays a role in the proteolytic processing of ACE2. Mediates the proteolytic cleavage of urinary UMOD that is required for UMOD polymerization. This chain is Serine protease hepsin (Hpn), found in Mus musculus (Mouse).